The following is a 328-amino-acid chain: Malate dehydrogenase (328 aa).

13–19 is a binding site for NAD(+); that stretch reads GGKGQIA. Residues Arg-94 and Arg-100 each coordinate substrate. NAD(+) contacts are provided by residues Asn-107, Gln-114, and 131–133; that span reads VGN. Positions 133 and 164 each coordinate substrate. The active-site Proton acceptor is the His-189.

The protein belongs to the LDH/MDH superfamily. MDH type 2 family.

The enzyme catalyses (S)-malate + NAD(+) = oxaloacetate + NADH + H(+). Its function is as follows. Catalyzes the reversible oxidation of malate to oxaloacetate. The chain is Malate dehydrogenase from Chlamydia pneumoniae (Chlamydophila pneumoniae).